A 152-amino-acid chain; its full sequence is Cytochrome c-type biogenesis protein CcmE (152 aa).

The Cytoplasmic portion of the chain corresponds to 1-9 (MRGLKKQRR). A helical; Signal-anchor for type II membrane protein membrane pass occupies residues 10–30 (IQILIVAAVALTLSSVLIGYA). The Periplasmic portion of the chain corresponds to 31-152 (LRDGINFFRP…PDGYARDGDS (122 aa)). Heme-binding residues include His-123 and Tyr-127.

The protein belongs to the CcmE/CycJ family.

The protein resides in the cell inner membrane. Its function is as follows. Heme chaperone required for the biogenesis of c-type cytochromes. Transiently binds heme delivered by CcmC and transfers the heme to apo-cytochromes in a process facilitated by CcmF and CcmH. In Jannaschia sp. (strain CCS1), this protein is Cytochrome c-type biogenesis protein CcmE.